A 423-amino-acid chain; its full sequence is Endoplasmic reticulum junction formation protein lunapark (423 aa).

The Cytoplasmic portion of the chain corresponds to 1 to 45 (MGALLAKWRAKPSTVEVLEKMEKDIQSLEEFRDKNQKLRKIWVAR). Residues 16-40 (EVLEKMEKDIQSLEEFRDKNQKLRK) adopt a coiled-coil conformation. Residues 46–66 (LFFYSTILYILTSLTVYLWYL) traverse the membrane as a helical segment. Residues 67–77 (PDGMTARLLTM) lie on the Lumenal side of the membrane. Residues 78–98 (LLFLSFPVLIWFVRTLLILWF) traverse the membrane as a helical segment. The Cytoplasmic segment spans residues 99–423 (SRRTERNNDA…ETEESFMETE (325 aa)). Positions 101–128 (RTERNNDALELLKTEKKKILEEVMEKET) form a coiled coil. Positions 147-169 (KELELPVPGPPITPRPGQDLRQR) are disordered. T159 is modified (phosphothreonine). A phosphoserine mark is found at S177, S179, and S188. T198 is subject to Phosphothreonine. The segment at 200-247 (SLQRDTSAPGGPPERSVQPTPQSNILQRRPGSPATTVSGMAIHPPGPP) is disordered. Phosphoserine is present on residues S206 and S215. Polar residues predominate over residues 216–225 (VQPTPQSNIL). T219 is modified (phosphothreonine). Residues S222 and S231 each carry the phosphoserine modification. Residues 280–305 (CQQCFSHNGMALKEEFEYVAFRCAYC) form a C4-type; plays a role in ER morphology zinc finger. The disordered stretch occupies residues 318-423 (APRLQEINFD…ETEESFMETE (106 aa)). Residues 334–343 (DSQGSVSSVQ) are compositionally biased toward polar residues. Composition is skewed to acidic residues over residues 370 to 391 (QAIE…DDSE) and 414 to 423 (ETEESFMETE).

Belongs to the lunapark family. As to quaternary structure, homodimer; homodimerization requires the C4-type zinc finger motif and decreases during mitosis in a phosphorylation-dependent manner. In terms of processing, phosphorylated. Phosphorylation at Thr-159 occurs during interphase. Phosphorylation at Ser-177, Ser-179, Ser-188, Thr-198, Ser-206, Ser-215, Thr-219, Ser-222 and Ser-231 occurs during mitosis; these phosphorylations reduce both its homodimerization and the ER three-way tubular junction formation.

Its subcellular location is the endoplasmic reticulum membrane. Functionally, endoplasmic reticulum (ER)-shaping membrane protein that plays a role in determining ER morphology. Involved in the stabilization of nascent three-way ER tubular junctions within the ER network. May also play a role as a curvature-stabilizing protein within three-way ER tubular junction network. The polypeptide is Endoplasmic reticulum junction formation protein lunapark (lnpk) (Xenopus tropicalis (Western clawed frog)).